We begin with the raw amino-acid sequence, 273 residues long: 4-hydroxy-tetrahydrodipicolinate reductase (273 aa).

NAD(+) contacts are provided by residues 11-16 (GALGRM) and 106-108 (GTT). The active-site Proton donor/acceptor is the His-162. His-163 serves as a coordination point for (S)-2,3,4,5-tetrahydrodipicolinate. Lys-166 serves as the catalytic Proton donor. 172 to 173 (GT) provides a ligand contact to (S)-2,3,4,5-tetrahydrodipicolinate.

The protein belongs to the DapB family.

It is found in the cytoplasm. The enzyme catalyses (S)-2,3,4,5-tetrahydrodipicolinate + NAD(+) + H2O = (2S,4S)-4-hydroxy-2,3,4,5-tetrahydrodipicolinate + NADH + H(+). It catalyses the reaction (S)-2,3,4,5-tetrahydrodipicolinate + NADP(+) + H2O = (2S,4S)-4-hydroxy-2,3,4,5-tetrahydrodipicolinate + NADPH + H(+). It participates in amino-acid biosynthesis; L-lysine biosynthesis via DAP pathway; (S)-tetrahydrodipicolinate from L-aspartate: step 4/4. In terms of biological role, catalyzes the conversion of 4-hydroxy-tetrahydrodipicolinate (HTPA) to tetrahydrodipicolinate. This Synechococcus sp. (strain RCC307) protein is 4-hydroxy-tetrahydrodipicolinate reductase.